The chain runs to 53 residues: Metallothionein (53 aa).

Residues 1–6 constitute a propeptide that is removed on maturation; sequence MRVIRM. Cu(+) is bound by residues cysteine 17, histidine 19, cysteine 22, cysteine 24, cysteine 32, histidine 33, cysteine 34, cysteine 43, and cysteine 45.

Belongs to the metallothionein superfamily.

In terms of biological role, metallothioneins are small proteins that have a high content of cysteine residues which allow them to bind heavy metal ions through clusters of thiolate bonds. MymT binds up to seven ions of Cu(+), with a preference for four to six Cu(+) ions, in a solvent-shielded core. MymT protects M.tuberculosis from copper toxicity. The protein is Metallothionein (mymT) of Mycobacterium tuberculosis (strain CDC 1551 / Oshkosh).